We begin with the raw amino-acid sequence, 188 residues long: MSIKSDKWIRRMAEREGMIEPFEEDQVRYVNERRVISYGTSSYGYDVRCADEFKVFTNIHSAVVDPKGFDEKSFVDVKGDVCVIPPNSFALARTVEYFRIPRSVLTICLGKSTYARCGIIVNVTPLEPEWEGHVTLEFSNTTNLPARIYANEGVAQMLFLESDEVCDVSYKDRGGKYMGQRGVTLPRT.

DCTP contacts are provided by residues 111–116 (KSTYAR), 135–137 (TLE), glutamine 156, tyrosine 170, and glutamine 180. Glutamate 137 serves as the catalytic Proton donor/acceptor.

This sequence belongs to the dCTP deaminase family. As to quaternary structure, homotrimer.

It carries out the reaction dCTP + H2O + H(+) = dUTP + NH4(+). It participates in pyrimidine metabolism; dUMP biosynthesis; dUMP from dCTP (dUTP route): step 1/2. Catalyzes the deamination of dCTP to dUTP. The protein is dCTP deaminase of Chromohalobacter salexigens (strain ATCC BAA-138 / DSM 3043 / CIP 106854 / NCIMB 13768 / 1H11).